The chain runs to 334 residues: Anthranilate phosphoribosyltransferase (334 aa).

5-phospho-alpha-D-ribose 1-diphosphate contacts are provided by residues G79, 82–83 (GD), S87, 89–92 (NIST), 107–115 (KHGNRSISS), and S119. Anthranilate is bound at residue G79. Mg(2+) is bound at residue S91. Residue N110 coordinates anthranilate. R165 contributes to the anthranilate binding site. 2 residues coordinate Mg(2+): D224 and E225.

This sequence belongs to the anthranilate phosphoribosyltransferase family. Homodimer. Requires Mg(2+) as cofactor.

The enzyme catalyses N-(5-phospho-beta-D-ribosyl)anthranilate + diphosphate = 5-phospho-alpha-D-ribose 1-diphosphate + anthranilate. The protein operates within amino-acid biosynthesis; L-tryptophan biosynthesis; L-tryptophan from chorismate: step 2/5. Its function is as follows. Catalyzes the transfer of the phosphoribosyl group of 5-phosphorylribose-1-pyrophosphate (PRPP) to anthranilate to yield N-(5'-phosphoribosyl)-anthranilate (PRA). This is Anthranilate phosphoribosyltransferase from Streptococcus sanguinis (strain SK36).